The chain runs to 351 residues: Modulator of apoptosis 1 (351 aa).

The LIR signature appears at 49–52 (YRLL). Residues 120-127 (LSRALGHE) form a BH3-like region. An RASSF1-binding region spans residues 202–205 (KRRR).

It belongs to the PNMA family. As to quaternary structure, homodimer. Under normal circumstances, held in an inactive conformation by an intramolecular interaction. Interacts with BAX. Binding to RASSF1 isoform A (RASSF1A) relieves this inhibitory interaction and allows further binding to BAX. Also binds to BCL2 and BCLX. Recruited to the TNFRSF1A and TNFRSF10A complexes in response to their respective cognate ligand, after internalization. Interacts with TRIM39. Interacts with RASSF6. Interacts with ATG8 proteins MAP1LC3A, MAP1LC3B and MAP1LC3C. Does not interact with ATG8 proteins GABARAPL1, GABARAPL2 and GABARAP. Interacts with SQSTM1; promoting dissociation of SQSTM1 inclusion bodies that sequester KEAP1. In terms of processing, ubiquitinated and degraded during mitotic exit by APC/C-Cdh1, this modification is inhibited by TRIM39. Widely expressed, with high levels in heart and brain.

It localises to the cytoplasm. The protein resides in the cytosol. It is found in the mitochondrion outer membrane. The protein localises to the extracellular vesicle membrane. In terms of biological role, retrotransposon-derived protein that forms virion-like capsids. Acts as an effector of BAX during apoptosis: enriched at outer mitochondria membrane and associates with BAX upon induction of apoptosis, facilitating BAX-dependent mitochondrial outer membrane permeabilization and apoptosis. Required for death receptor-dependent apoptosis. When associated with RASSF1, promotes BAX conformational change and translocation to mitochondrial membranes in response to TNF and TNFSF10 stimulation. Also promotes autophagy: promotes phagophore closure via association with ATG8 proteins. Acts as an inhibitor of the NFE2L2/NRF2 pathway via interaction with SQSTM1: interaction promotes dissociation of SQSTM1 inclusion bodies that sequester KEAP1, relieving inactivation of the BCR(KEAP1) complex. In Homo sapiens (Human), this protein is Modulator of apoptosis 1.